Consider the following 605-residue polypeptide: Glutamine--fructose-6-phosphate aminotransferase [isomerizing] (605 aa).

The Nucleophile; for GATase activity role is filled by C2. The 215-residue stretch at 2-216 folds into the Glutamine amidotransferase type-2 domain; sequence CGIVGIVGHQ…DGDWAVIGKT (215 aa). SIS domains follow at residues 280–420 and 454–595; these read DSDA…ARGT and LSRE…VDQP. The active-site For Fru-6P isomerization activity is the K600.

The protein resides in the cytoplasm. The catalysed reaction is D-fructose 6-phosphate + L-glutamine = D-glucosamine 6-phosphate + L-glutamate. Functionally, involved in the production of the root hair deformation (HAD) factor specifically on medicago. The polypeptide is Glutamine--fructose-6-phosphate aminotransferase [isomerizing] (nodM) (Rhizobium meliloti (Ensifer meliloti)).